A 67-amino-acid chain; its full sequence is Large ribosomal subunit protein uL29 (67 aa).

Belongs to the universal ribosomal protein uL29 family.

The sequence is that of Large ribosomal subunit protein uL29 from Gemmatimonas aurantiaca (strain DSM 14586 / JCM 11422 / NBRC 100505 / T-27).